Reading from the N-terminus, the 283-residue chain is Elongation factor Ts (283 aa).

The involved in Mg(2+) ion dislocation from EF-Tu stretch occupies residues 80 to 83; that stretch reads TDFV.

This sequence belongs to the EF-Ts family.

It is found in the cytoplasm. Its function is as follows. Associates with the EF-Tu.GDP complex and induces the exchange of GDP to GTP. It remains bound to the aminoacyl-tRNA.EF-Tu.GTP complex up to the GTP hydrolysis stage on the ribosome. The chain is Elongation factor Ts from Histophilus somni (strain 129Pt) (Haemophilus somnus).